The sequence spans 90 residues: Acylphosphatase (90 aa).

The Acylphosphatase-like domain maps to 4-90 (CVRVRVSGRV…KGHDDFKIIY (87 aa)). Residues Arg-19 and Asn-37 contribute to the active site.

The protein belongs to the acylphosphatase family.

The enzyme catalyses an acyl phosphate + H2O = a carboxylate + phosphate + H(+). The sequence is that of Acylphosphatase (acyP) from Methanothrix thermoacetophila (strain DSM 6194 / JCM 14653 / NBRC 101360 / PT) (Methanosaeta thermophila).